We begin with the raw amino-acid sequence, 671 residues long: DNA ligase (671 aa).

NAD(+)-binding positions include 32-36 (DAEYD), 81-82 (SL), and E113. Residue K115 is the N6-AMP-lysine intermediate of the active site. Residues R136, E173, K290, and K314 each contribute to the NAD(+) site. Positions 408, 411, 426, and 432 each coordinate Zn(2+). A BRCT domain is found at 593–671 (EIDSPFAGKT…EAEMIRLLGA (79 aa)).

The protein belongs to the NAD-dependent DNA ligase family. LigA subfamily. Requires Mg(2+) as cofactor. The cofactor is Mn(2+).

It carries out the reaction NAD(+) + (deoxyribonucleotide)n-3'-hydroxyl + 5'-phospho-(deoxyribonucleotide)m = (deoxyribonucleotide)n+m + AMP + beta-nicotinamide D-nucleotide.. In terms of biological role, DNA ligase that catalyzes the formation of phosphodiester linkages between 5'-phosphoryl and 3'-hydroxyl groups in double-stranded DNA using NAD as a coenzyme and as the energy source for the reaction. It is essential for DNA replication and repair of damaged DNA. The protein is DNA ligase of Salmonella paratyphi A (strain ATCC 9150 / SARB42).